The sequence spans 100 residues: Small ribosomal subunit protein uS14c (100 aa).

This sequence belongs to the universal ribosomal protein uS14 family. As to quaternary structure, part of the 30S ribosomal subunit.

Its subcellular location is the plastid. Binds 16S rRNA, required for the assembly of 30S particles. This is Small ribosomal subunit protein uS14c from Euglena longa (Euglenophycean alga).